A 330-amino-acid chain; its full sequence is MAKVYYDNDVNKEYLKNKKIAVLGYGSQGHAHALNLKDSGYDVVIGVREGQSRTKAEEDGFQAYDVSEAVERADVTVVLMPDEVQQRVFNEEIVPHLKPQSALVFAHGFNVHFGAIKAPDDVDVFLVAPKGPGHLVRREYVKGSAVPALFAVDQDVTGDAKALALNYAHGIGATRAGVIETTFKEETETDLFGEQAVLCGGITKLIHYGFETLTEAGYQPELAYFEVLHEMKLIVDLMYEGGMEKMRHSISNTAEFGDYVSGARVITPEVKENMKQVLADIQSGTFSRQFIEDNNNGFESFKSMRSTQAGHPIEKVGADLRMMMPFINNN.

One can recognise a KARI N-terminal Rossmann domain in the interval 2–181; it reads AKVYYDNDVN…GATRAGVIET (180 aa). Residues 25 to 28, arginine 48, serine 52, and 82 to 85 contribute to the NADP(+) site; these read YGSQ and DEVQ. Histidine 107 is a catalytic residue. NADP(+) is bound at residue glycine 133. The KARI C-terminal knotted domain occupies 182-327; it reads TFKEETETDL…ADLRMMMPFI (146 aa). Aspartate 190, glutamate 194, glutamate 226, and glutamate 230 together coordinate Mg(2+). Serine 251 provides a ligand contact to substrate.

Belongs to the ketol-acid reductoisomerase family. Mg(2+) is required as a cofactor.

It catalyses the reaction (2R)-2,3-dihydroxy-3-methylbutanoate + NADP(+) = (2S)-2-acetolactate + NADPH + H(+). It carries out the reaction (2R,3R)-2,3-dihydroxy-3-methylpentanoate + NADP(+) = (S)-2-ethyl-2-hydroxy-3-oxobutanoate + NADPH + H(+). Its pathway is amino-acid biosynthesis; L-isoleucine biosynthesis; L-isoleucine from 2-oxobutanoate: step 2/4. The protein operates within amino-acid biosynthesis; L-valine biosynthesis; L-valine from pyruvate: step 2/4. In terms of biological role, involved in the biosynthesis of branched-chain amino acids (BCAA). Catalyzes an alkyl-migration followed by a ketol-acid reduction of (S)-2-acetolactate (S2AL) to yield (R)-2,3-dihydroxy-isovalerate. In the isomerase reaction, S2AL is rearranged via a Mg-dependent methyl migration to produce 3-hydroxy-3-methyl-2-ketobutyrate (HMKB). In the reductase reaction, this 2-ketoacid undergoes a metal-dependent reduction by NADPH to yield (R)-2,3-dihydroxy-isovalerate. The sequence is that of Ketol-acid reductoisomerase (NADP(+)) from Macrococcus caseolyticus (strain JCSC5402) (Macrococcoides caseolyticum).